The chain runs to 970 residues: Sodium/calcium exchanger 1 (970 aa).

The first 32 residues, 1–32 (MLRLRLSPTFSVGFHLLAFVPLLFSHVDLISA), serve as a signal peptide directing secretion. The Extracellular portion of the chain corresponds to 33–71 (DTEMEGEGNETGECTGSYYCKKGVILPIWEPQDPSFGDK). N-linked (GlcNAc...) asparagine glycosylation occurs at asparagine 41. Residues 72-92 (IARATVYFVAMVYMFLGVSII) traverse the membrane as a helical segment. Topologically, residues 93–133 (ADRFMSSIEVITSQEKEITIKKPNGETTKTTVRIWNETVSN) are cytoplasmic. Residues 134–154 (LTLMALGSSAPEILLSVIEVC) form a helical membrane-spanning segment. One copy of the Alpha-1 repeat lies at 138 to 178 (ALGSSAPEILLSVIEVCGHNFTAGDLGPSTIVGSAAFNMFI). The Extracellular portion of the chain corresponds to 155–167 (GHNFTAGDLGPST). Asparagine 157 is a glycosylation site (N-linked (GlcNAc...) asparagine). Residues 168-188 (IVGSAAFNMFIIIALCVYVVP) traverse the membrane as a helical segment. Residues 189–201 (DGETRKIKHLRVF) lie on the Cytoplasmic side of the membrane. Residues 202–222 (FVTAAWSIFAYTWLYIILSVI) form a helical membrane-spanning segment. Residues 223-228 (SPGVVE) are Extracellular-facing. A helical transmembrane segment spans residues 229 to 249 (VWEGLLTFFFFPICVVFAWVA). The Cytoplasmic segment spans residues 250 to 797 (DRRLLFYKYV…FVPPTEYWNG (548 aa)). Positions 251-270 (RRLLFYKYVYKRYRAGKQRG) are putative calmodulin-binding region. 2 positions are modified to phosphoserine: serine 282 and serine 389. Calx-beta domains are found at residues 393–493 (VNTE…VHLS) and 524–624 (ATVT…LEIG). Glutamate 417, aspartate 453, aspartate 478, aspartate 479, isoleucine 481, glutamate 483, glutamate 486, aspartate 530, aspartate 531, aspartate 532, glutamate 548, aspartate 584, aspartate 610, glutamate 611, glutamate 612, and glutamate 715 together coordinate Ca(2+). The helical transmembrane segment at 798–818 (WACFIVSILMIGILTAFIGDL) threads the bilayer. The Extracellular portion of the chain corresponds to 819–821 (ASH). The helical transmembrane segment at 822–842 (FGCTIGLKDSVTAVVFVALGT) threads the bilayer. The stretch at 839–875 (ALGTSVPDTFASKVAATQDQYADASIGNVTGSNAVNV) is one Alpha-2 repeat. Over 843 to 871 (SVPDTFASKVAATQDQYADASIGNVTGSN) the chain is Cytoplasmic. A helical membrane pass occupies residues 872–892 (AVNVFLGIGVAWSIAAIYHAA). Residues 893–903 (NGEQFKVSPGT) lie on the Extracellular side of the membrane. A helical transmembrane segment spans residues 904-924 (LAFSVTLFTIFAFINVGVLLY). The Cytoplasmic portion of the chain corresponds to 925 to 941 (RRRPEIGGELGGPRTAK). A helical membrane pass occupies residues 942–962 (LLTSCLFVLLWLLYIFFSSLE). Over 963–970 (AYCHIKGF) the chain is Extracellular.

Belongs to the Ca(2+):cation antiporter (CaCA) (TC 2.A.19) family. SLC8 subfamily. In terms of tissue distribution, detected in heart (at protein level). Detected in heart.

Its subcellular location is the cell membrane. It carries out the reaction Ca(2+)(in) + 3 Na(+)(out) = Ca(2+)(out) + 3 Na(+)(in). With respect to regulation, activated by micromolar levels of Ca(2+). Its function is as follows. Mediates the exchange of one Ca(2+) ion against three to four Na(+) ions across the cell membrane, and thereby contributes to the regulation of cytoplasmic Ca(2+) levels and Ca(2+)-dependent cellular processes. Contributes to Ca(2+) transport during excitation-contraction coupling in muscle. In a first phase, voltage-gated channels mediate the rapid increase of cytoplasmic Ca(2+) levels due to release of Ca(2+) stores from the endoplasmic reticulum. SLC8A1 mediates the export of Ca(2+) from the cell during the next phase, so that cytoplasmic Ca(2+) levels rapidly return to baseline. Required for normal embryonic heart development and the onset of heart contractions. The chain is Sodium/calcium exchanger 1 (SLC8A1) from Felis catus (Cat).